We begin with the raw amino-acid sequence, 448 residues long: Beta-glucosidase A (448 aa).

Glu166 (proton donor) is an active-site residue. Glu352 functions as the Nucleophile in the catalytic mechanism.

It belongs to the glycosyl hydrolase 1 family. Homooctamer.

The catalysed reaction is Hydrolysis of terminal, non-reducing beta-D-glucosyl residues with release of beta-D-glucose.. Functionally, bglA is intracellular and cleaves cellobiose probably through inorganic phosphate mediated hydrolysis. This Paenibacillus polymyxa (Bacillus polymyxa) protein is Beta-glucosidase A (bglA).